Consider the following 2368-residue polypeptide: Highly reducing polyketide synthase cla2 (2368 aa).

A Ketosynthase family 3 (KS3) domain is found at glutamine 10 to alanine 434. Residues cysteine 182, histidine 317, and histidine 357 each act as for beta-ketoacyl synthase activity in the active site. Residues phenylalanine 548–leucine 877 are malonyl-CoA:ACP transacylase (MAT) domain. Serine 638 (for malonyltransferase activity) is an active-site residue. The segment at histidine 936–lysine 1071 is N-terminal hotdog fold. Residues histidine 936–threonine 1175 form a dehydratase (DH) domain region. The region spanning histidine 936–alanine 1255 is the PKS/mFAS DH domain. Histidine 968 (proton acceptor; for dehydratase activity) is an active-site residue. A C-terminal hotdog fold region spans residues proline 1099–alanine 1255. The Proton donor; for dehydratase activity role is filled by aspartate 1165. The enoylreductase (ER) domain stretch occupies residues glycine 1655–leucine 1967. Positions alanine 1991–arginine 2170 are catalytic ketoreductase (KRc) domain. A Carrier domain is found at glutamine 2283–serine 2360. Residue serine 2320 is modified to O-(pantetheine 4'-phosphoryl)serine.

The protein operates within secondary metabolite biosynthesis. Highly reducing polyketide synthase; part of the gene cluster that mediates the biosynthesis of cladosporin, a tricyclic octaketide that acts as an antimalarial agent though inhibition of the Plasmodium falciparum lysyl-tRNA synthetase. The highly reducing polyketide synthase cla2 is responsible for biosynthesis up to the pentaketide stage, including of the tetrahydropyran (THP) ring, whereas the three subsequent ketide extensions with no reduction are catalyzed by the non-reducing polyketide synthase cla3. This Cladosporium cladosporioides protein is Highly reducing polyketide synthase cla2.